Reading from the N-terminus, the 200-residue chain is ATP-dependent Clp protease proteolytic subunit (200 aa).

Ser98 serves as the catalytic Nucleophile. His123 is an active-site residue.

The protein belongs to the peptidase S14 family. As to quaternary structure, fourteen ClpP subunits assemble into 2 heptameric rings which stack back to back to give a disk-like structure with a central cavity, resembling the structure of eukaryotic proteasomes.

Its subcellular location is the cytoplasm. The enzyme catalyses Hydrolysis of proteins to small peptides in the presence of ATP and magnesium. alpha-casein is the usual test substrate. In the absence of ATP, only oligopeptides shorter than five residues are hydrolyzed (such as succinyl-Leu-Tyr-|-NHMec, and Leu-Tyr-Leu-|-Tyr-Trp, in which cleavage of the -Tyr-|-Leu- and -Tyr-|-Trp bonds also occurs).. Cleaves peptides in various proteins in a process that requires ATP hydrolysis. Has a chymotrypsin-like activity. Plays a major role in the degradation of misfolded proteins. The protein is ATP-dependent Clp protease proteolytic subunit of Deinococcus geothermalis (strain DSM 11300 / CIP 105573 / AG-3a).